The following is a 375-amino-acid chain: Pectate lyase B (375 aa).

Residues Met-1–Ala-22 form the signal peptide. The cysteines at positions 93 and 176 are disulfide-linked. Positions 150, 152, 187, and 191 each coordinate Ca(2+). Arg-240 is a catalytic residue. Cys-351 and Cys-374 are oxidised to a cystine.

The protein belongs to the polysaccharide lyase 1 family. PLADES subfamily. It depends on Ca(2+) as a cofactor.

It is found in the secreted. The enzyme catalyses Eliminative cleavage of (1-&gt;4)-alpha-D-galacturonan to give oligosaccharides with 4-deoxy-alpha-D-galact-4-enuronosyl groups at their non-reducing ends.. It participates in glycan metabolism; pectin degradation; 2-dehydro-3-deoxy-D-gluconate from pectin: step 2/5. Functionally, involved in maceration and soft-rotting of plant tissue. The protein is Pectate lyase B (pelB) of Dickeya chrysanthemi (Pectobacterium chrysanthemi).